We begin with the raw amino-acid sequence, 359 residues long: 3-dehydroquinate synthase (359 aa).

Residues 71–76 (DGEAHK), 105–109 (GVIGD), 129–130 (TT), lysine 142, lysine 151, and 169–172 (TLHT) each bind NAD(+). Residues glutamate 184, histidine 247, and histidine 264 each coordinate Zn(2+).

This sequence belongs to the sugar phosphate cyclases superfamily. Dehydroquinate synthase family. Co(2+) is required as a cofactor. It depends on Zn(2+) as a cofactor. The cofactor is NAD(+).

The protein resides in the cytoplasm. The catalysed reaction is 7-phospho-2-dehydro-3-deoxy-D-arabino-heptonate = 3-dehydroquinate + phosphate. Its pathway is metabolic intermediate biosynthesis; chorismate biosynthesis; chorismate from D-erythrose 4-phosphate and phosphoenolpyruvate: step 2/7. Its function is as follows. Catalyzes the conversion of 3-deoxy-D-arabino-heptulosonate 7-phosphate (DAHP) to dehydroquinate (DHQ). The polypeptide is 3-dehydroquinate synthase (Neisseria meningitidis serogroup C (strain 053442)).